A 423-amino-acid chain; its full sequence is Lipase member M (423 aa).

Positions 1 to 33 are cleaved as a signal peptide; sequence MLETLSRQWIVSHRMEMWLLILVAYMFQRNVNS. Residue N48 is glycosylated (N-linked (GlcNAc...) asparagine). Positions 92 to 392 constitute an AB hydrolase-1 domain; sequence PVVLLQHGLV…EWAHVDFIWG (301 aa). S186 (nucleophile) is an active-site residue. C260 and C269 form a disulfide bridge. Catalysis depends on charge relay system residues D357 and H386.

Belongs to the AB hydrolase superfamily. Lipase family. Exclusively expressed in the epidermis within the granular keratinocytes.

Its subcellular location is the secreted. Plays a highly specific role in the last step of keratinocyte differentiation. May have an essential function in lipid metabolism of the most differentiated epidermal layers. The sequence is that of Lipase member M (LIPM) from Homo sapiens (Human).